Reading from the N-terminus, the 241-residue chain is MEDCCMLPYYTAQSSPAMGMFNTSMGKLQRQLYKGEYTIFRYAPMFESDFIQISKRGEVIDVHNRARMVTMGIVRTSPCLTLPDVMLLARPAAVCDNARCGPATQKRESPPAEILELTRLLPLMFVKITIHNSVKKQLHLKLATGRSFYLQLCPPSDASEDLFVHWENLVYILRPPVEAYSDTRAILAGNTLDSSVLEEVQRSPVGYAMKFCEEKEQFRISRLHMNAEMFGSTYCDYTIEI.

It belongs to the GARIN family.

The protein is Golgi-associated RAB2 interactor protein 6 of Homo sapiens (Human).